The following is a 319-amino-acid chain: MNATTSAAAYGPLAGADLEAELAQARVADSDARDAAILEHDGSASVVPLARRRTSGTAPDDAVTLSGVSKRFGARTVLDNVELGIARGSFVAIVGRSGCGKSTLLRLVAGLEQPSSGALVTRGEGGGALDTRIMYQDARLLPWKTVLQNVMLGLGRGARDQARAVLDEVGLLERANDWPAQLSGGQRQRVALARALVHRPQLLLLDEPLGALDALTRIEMHALIERLWREHRFTALLVTHDVQEAVALGDRILLIEQGRVALDQAVPLDRPRARASAAFAALEDRVLKRVLAGGPGAADHDAEHEADKVRPVGQIRWAV.

Residues 63–282 enclose the ABC transporter domain; it reads VTLSGVSKRF…ARASAAFAAL (220 aa). 95-102 is a binding site for ATP; that stretch reads GRSGCGKS.

The protein belongs to the ABC transporter superfamily. Aliphatic sulfonates importer (TC 3.A.1.17.2) family. As to quaternary structure, the complex is composed of two ATP-binding proteins (SsuB), two transmembrane proteins (SsuC) and a solute-binding protein (SsuA).

It is found in the cell inner membrane. It catalyses the reaction ATP + H2O + aliphatic sulfonate-[sulfonate-binding protein]Side 1 = ADP + phosphate + aliphatic sulfonateSide 2 + [sulfonate-binding protein]Side 1.. Functionally, part of the ABC transporter complex SsuABC involved in aliphatic sulfonates import. Responsible for energy coupling to the transport system. This chain is Aliphatic sulfonates import ATP-binding protein SsuB 1, found in Burkholderia cenocepacia (strain HI2424).